We begin with the raw amino-acid sequence, 273 residues long: Undecaprenyl-diphosphatase (273 aa).

Helical transmembrane passes span 7–27, 45–65, 89–109, 115–135, 152–171, 189–209, 221–241, and 253–273; these read LWIA…PVSS, AETF…VMFW, LTLI…LLLH, LFNP…LIAA, TYRQ…WPGF, YAAS…ATGL, ADFP…LIAI, and FIPF…LFVL.

Belongs to the UppP family.

It is found in the cell inner membrane. It carries out the reaction di-trans,octa-cis-undecaprenyl diphosphate + H2O = di-trans,octa-cis-undecaprenyl phosphate + phosphate + H(+). Catalyzes the dephosphorylation of undecaprenyl diphosphate (UPP). Confers resistance to bacitracin. This chain is Undecaprenyl-diphosphatase, found in Erwinia tasmaniensis (strain DSM 17950 / CFBP 7177 / CIP 109463 / NCPPB 4357 / Et1/99).